We begin with the raw amino-acid sequence, 24 residues long: Neurotoxin-2 (24 aa).

Positions 1–24 constitute an LCN-type CS-alpha/beta domain; that stretch reads EDGYLLNRDTGCKVSCGTCRYCND.

This sequence belongs to the long (4 C-C) scorpion toxin superfamily. Sodium channel inhibitor family. Alpha subfamily. In terms of tissue distribution, expressed by the venom gland.

The protein localises to the secreted. In terms of biological role, binds to sodium channels (Nav) and inhibits the inactivation of the activated channels, thereby blocking neuronal transmission. This toxin is active against mammals. In Hottentotta tamulus (Eastern Indian scorpion), this protein is Neurotoxin-2.